A 624-amino-acid polypeptide reads, in one-letter code: Iron transport multicopper oxidase FET3 (624 aa).

The signal sequence occupies residues methionine 1–alanine 20. Residues alanine 21–lysine 555 are Extracellular-facing. Plastocyanin-like domains are found at residues isoleucine 46 to glutamate 144 and asparagine 190 to asparagine 292. 2 N-linked (GlcNAc...) asparagine glycosylation sites follow: asparagine 49 and asparagine 77. Residues histidine 81 and histidine 83 each coordinate Cu cation. Asparagine 113 is a glycosylation site (N-linked (GlcNAc...) asparagine). Residues histidine 126 and histidine 128 each coordinate Cu cation. N-linked (GlcNAc...) asparagine glycans are attached at residues asparagine 194, asparagine 198, asparagine 244, asparagine 265, asparagine 292, asparagine 300, and asparagine 359. Residues asparagine 382 to aspartate 499 enclose the Plastocyanin-like 3 domain. Cu cation-binding residues include histidine 413, histidine 416, and histidine 418. Asparagine 441 carries an N-linked (GlcNAc...) asparagine glycan. Residues histidine 481, cysteine 482, histidine 483, and histidine 487 each contribute to the Cu cation site. The chain crosses the membrane as a helical span at residues glycine 556–phenylalanine 576. Residues tyrosine 577 to histidine 624 lie on the Cytoplasmic side of the membrane. The disordered stretch occupies residues aspartate 603–histidine 624. Residues valine 608–histidine 624 are compositionally biased toward low complexity.

Belongs to the multicopper oxidase family. Cu cation is required as a cofactor.

The protein localises to the cell membrane. Its function is as follows. Iron transport multicopper ferroxidase required for Fe(2+) high affinity uptake. Required to oxidize Fe(2+) and release it from the transporter. Essential component of copper-dependent iron transport. The protein is Iron transport multicopper oxidase FET3 (FET3) of Candida albicans (Yeast).